The sequence spans 486 residues: Protein nucleotidyltransferase YdiU (486 aa).

Residues Gly-90, Gly-92, Arg-93, Lys-113, Asp-125, Gly-126, Arg-176, and Arg-183 each contribute to the ATP site. Asp-252 serves as the catalytic Proton acceptor. Mg(2+)-binding residues include Asn-253 and Asp-262. Asp-262 is an ATP binding site.

Belongs to the SELO family. Mg(2+) is required as a cofactor. The cofactor is Mn(2+).

It catalyses the reaction L-seryl-[protein] + ATP = 3-O-(5'-adenylyl)-L-seryl-[protein] + diphosphate. The enzyme catalyses L-threonyl-[protein] + ATP = 3-O-(5'-adenylyl)-L-threonyl-[protein] + diphosphate. The catalysed reaction is L-tyrosyl-[protein] + ATP = O-(5'-adenylyl)-L-tyrosyl-[protein] + diphosphate. It carries out the reaction L-histidyl-[protein] + UTP = N(tele)-(5'-uridylyl)-L-histidyl-[protein] + diphosphate. It catalyses the reaction L-seryl-[protein] + UTP = O-(5'-uridylyl)-L-seryl-[protein] + diphosphate. The enzyme catalyses L-tyrosyl-[protein] + UTP = O-(5'-uridylyl)-L-tyrosyl-[protein] + diphosphate. Its function is as follows. Nucleotidyltransferase involved in the post-translational modification of proteins. It can catalyze the addition of adenosine monophosphate (AMP) or uridine monophosphate (UMP) to a protein, resulting in modifications known as AMPylation and UMPylation. The chain is Protein nucleotidyltransferase YdiU from Pseudomonas aeruginosa (strain UCBPP-PA14).